We begin with the raw amino-acid sequence, 141 residues long: Hemoglobin subunit alpha (141 aa).

The Globin domain maps to 1 to 141 (VLSSKDKTNV…VSTVLTSKYR (141 aa)). Ser-3 is subject to Phosphoserine. The residue at position 7 (Lys-7) is an N6-succinyllysine. A Phosphothreonine modification is found at Thr-8. Lys-11 bears the N6-succinyllysine mark. Lys-16 bears the N6-acetyllysine; alternate mark. The residue at position 16 (Lys-16) is an N6-succinyllysine; alternate. Tyr-24 carries the post-translational modification Phosphotyrosine. Lys-40 carries the N6-succinyllysine modification. Ser-49 carries the post-translational modification Phosphoserine. His-58 lines the O2 pocket. His-87 contributes to the heme b binding site. At Ser-102 the chain carries Phosphoserine. The residue at position 108 (Thr-108) is a Phosphothreonine. A Phosphoserine modification is found at Ser-124. 2 positions are modified to phosphothreonine: Thr-134 and Thr-137. Ser-138 is subject to Phosphoserine.

It belongs to the globin family. Heterotetramer of two alpha chains and two beta chains. In terms of tissue distribution, red blood cells.

Functionally, involved in oxygen transport from the lung to the various peripheral tissues. Its function is as follows. Hemopressin acts as an antagonist peptide of the cannabinoid receptor CNR1. Hemopressin-binding efficiently blocks cannabinoid receptor CNR1 and subsequent signaling. This chain is Hemoglobin subunit alpha (HBA), found in Camelus dromedarius (Dromedary).